A 164-amino-acid polypeptide reads, in one-letter code: RNA pyrophosphohydrolase (164 aa).

Positions 8–153 (PYRSNVGAAL…KRPIYERLAR (146 aa)) constitute a Nudix hydrolase domain. The short motif at 45–66 (GGIDGDEDPAAAVLRELDEEIG) is the Nudix box element.

This sequence belongs to the Nudix hydrolase family. RppH subfamily. It depends on a divalent metal cation as a cofactor.

Accelerates the degradation of transcripts by removing pyrophosphate from the 5'-end of triphosphorylated RNA, leading to a more labile monophosphorylated state that can stimulate subsequent ribonuclease cleavage. The protein is RNA pyrophosphohydrolase of Acidiphilium cryptum (strain JF-5).